Consider the following 600-residue polypeptide: Potassium-transporting ATPase potassium-binding subunit (600 aa).

11 consecutive transmembrane segments (helical) span residues 6–26 (IILL…LGTY), 65–85 (GYAI…YAVQ), 136–156 (ALSG…YALI), 179–199 (LYVL…QGVI), 283–303 (FSNL…CFTF), 314–334 (WAIL…VMGA), 367–387 (FGIS…CGAV), 419–439 (GLYG…LMIG), 458–478 (SLVI…AVVL), 523–543 (VMLA…VLAI), and 566–586 (LFIA…YVPA).

It belongs to the KdpA family. The system is composed of three essential subunits: KdpA, KdpB and KdpC.

The protein resides in the cell inner membrane. In terms of biological role, part of the high-affinity ATP-driven potassium transport (or Kdp) system, which catalyzes the hydrolysis of ATP coupled with the electrogenic transport of potassium into the cytoplasm. This subunit binds the periplasmic potassium ions and delivers the ions to the membrane domain of KdpB through an intramembrane tunnel. The sequence is that of Potassium-transporting ATPase potassium-binding subunit from Janthinobacterium sp. (strain Marseille) (Minibacterium massiliensis).